The chain runs to 30 residues: Bowman-Birk type proteinase inhibitor 3 (30 aa).

2 cysteine pairs are disulfide-bonded: C9–C24 and C14–C22.

In terms of biological role, inhibits trypsin (IC(50)=4.90 nM) and, to a lesser extent, alpha-chymotrypsin (IC(50)=1.87 uM). This is Bowman-Birk type proteinase inhibitor 3 from Lathyrus sativus (White vetchling).